The sequence spans 303 residues: Recombination-associated protein RdgC (303 aa).

It belongs to the RdgC family.

The protein resides in the cytoplasm. It is found in the nucleoid. May be involved in recombination. This Serratia proteamaculans (strain 568) protein is Recombination-associated protein RdgC.